The chain runs to 561 residues: Arginine--tRNA ligase (561 aa).

Residues 128-138 carry the 'HIGH' region motif; the sequence is ANPTGPLHVGH.

It belongs to the class-I aminoacyl-tRNA synthetase family. As to quaternary structure, monomer.

Its subcellular location is the cytoplasm. The catalysed reaction is tRNA(Arg) + L-arginine + ATP = L-arginyl-tRNA(Arg) + AMP + diphosphate. This Methylibium petroleiphilum (strain ATCC BAA-1232 / LMG 22953 / PM1) protein is Arginine--tRNA ligase.